The chain runs to 416 residues: Enolase (416 aa).

Gln160 provides a ligand contact to (2R)-2-phosphoglycerate. Glu204 functions as the Proton donor in the catalytic mechanism. Mg(2+) is bound by residues Asp239, Glu280, and Asp306. The (2R)-2-phosphoglycerate site is built by Lys331, Arg360, Ser361, and Lys382. Lys331 (proton acceptor) is an active-site residue.

Belongs to the enolase family. Mg(2+) serves as cofactor.

The protein resides in the cytoplasm. It is found in the secreted. The protein localises to the cell surface. The enzyme catalyses (2R)-2-phosphoglycerate = phosphoenolpyruvate + H2O. Its pathway is carbohydrate degradation; glycolysis; pyruvate from D-glyceraldehyde 3-phosphate: step 4/5. Catalyzes the reversible conversion of 2-phosphoglycerate (2-PG) into phosphoenolpyruvate (PEP). It is essential for the degradation of carbohydrates via glycolysis. This is Enolase from Sulfurisphaera tokodaii (strain DSM 16993 / JCM 10545 / NBRC 100140 / 7) (Sulfolobus tokodaii).